Here is a 297-residue protein sequence, read N- to C-terminus: GTPase Era (297 aa).

In terms of domain architecture, Era-type G spans 7-174 (RSGFVSIVGR…VQLVHGLLPE (168 aa)). The tract at residues 15-22 (GRPNVGKS) is G1. 15–22 (GRPNVGKS) lines the GTP pocket. The segment at 41 to 45 (QTTRN) is G2. The G3 stretch occupies residues 62 to 65 (DTPG). GTP-binding positions include 62 to 66 (DTPGI) and 124 to 127 (NKID). The interval 124–127 (NKID) is G4. The tract at residues 153–155 (VSA) is G5. Residues 205 to 282 (THDEVPYSTA…FLELFVRVSG (78 aa)) enclose the KH type-2 domain.

Belongs to the TRAFAC class TrmE-Era-EngA-EngB-Septin-like GTPase superfamily. Era GTPase family. Monomer.

The protein resides in the cytoplasm. It is found in the cell inner membrane. In terms of biological role, an essential GTPase that binds both GDP and GTP, with rapid nucleotide exchange. Plays a role in 16S rRNA processing and 30S ribosomal subunit biogenesis and possibly also in cell cycle regulation and energy metabolism. The chain is GTPase Era from Geobacter sp. (strain M21).